The chain runs to 537 residues: Phosphoenolpyruvate carboxykinase (ATP) (537 aa).

Positions 61, 195, and 201 each coordinate substrate. Residues K201, H220, and 236 to 244 each bind ATP; that span reads GLSGTGKTT. Mn(2+) contacts are provided by K201 and H220. Residue D257 participates in Mn(2+) binding. Residues E285, R323, and T448 each coordinate ATP. R323 lines the substrate pocket.

Belongs to the phosphoenolpyruvate carboxykinase (ATP) family. Mn(2+) serves as cofactor.

It is found in the cytoplasm. The catalysed reaction is oxaloacetate + ATP = phosphoenolpyruvate + ADP + CO2. Its pathway is carbohydrate biosynthesis; gluconeogenesis. In terms of biological role, involved in the gluconeogenesis. Catalyzes the conversion of oxaloacetate (OAA) to phosphoenolpyruvate (PEP) through direct phosphoryl transfer between the nucleoside triphosphate and OAA. The chain is Phosphoenolpyruvate carboxykinase (ATP) from Azorhizobium caulinodans (strain ATCC 43989 / DSM 5975 / JCM 20966 / LMG 6465 / NBRC 14845 / NCIMB 13405 / ORS 571).